The primary structure comprises 232 residues: Large ribosomal subunit protein uL1 (232 aa).

It belongs to the universal ribosomal protein uL1 family. In terms of assembly, part of the 50S ribosomal subunit.

In terms of biological role, binds directly to 23S rRNA. The L1 stalk is quite mobile in the ribosome, and is involved in E site tRNA release. Its function is as follows. Protein L1 is also a translational repressor protein, it controls the translation of the L11 operon by binding to its mRNA. This is Large ribosomal subunit protein uL1 from Thermosipho melanesiensis (strain DSM 12029 / CIP 104789 / BI429).